The chain runs to 201 residues: Probable GTP-binding protein EngB (201 aa).

Residues 22–195 (SLPEIAFCGR…MEQLEMILKY (174 aa)) form the EngB-type G domain. Residues 30–37 (GRSNVGKS), 57–61 (GKTRT), 75–78 (DLPG), 142–145 (TKLD), and 174–176 (YSS) each bind GTP. Residues S37 and T59 each coordinate Mg(2+).

Belongs to the TRAFAC class TrmE-Era-EngA-EngB-Septin-like GTPase superfamily. EngB GTPase family. Requires Mg(2+) as cofactor.

Its function is as follows. Necessary for normal cell division and for the maintenance of normal septation. The chain is Probable GTP-binding protein EngB from Finegoldia magna (strain ATCC 29328 / DSM 20472 / WAL 2508) (Peptostreptococcus magnus).